The following is a 174-amino-acid chain: RNA pyrophosphohydrolase (174 aa).

Residues 6–149 (GYRPNVGIIL…KRDVYLGALK (144 aa)) form the Nudix hydrolase domain. A Nudix box motif is present at residues 38-59 (GGIKPGESPETAMYRELYEEVG).

It belongs to the Nudix hydrolase family. RppH subfamily. Requires a divalent metal cation as cofactor.

Accelerates the degradation of transcripts by removing pyrophosphate from the 5'-end of triphosphorylated RNA, leading to a more labile monophosphorylated state that can stimulate subsequent ribonuclease cleavage. The sequence is that of RNA pyrophosphohydrolase from Neisseria meningitidis serogroup B (strain ATCC BAA-335 / MC58).